Reading from the N-terminus, the 458-residue chain is UDP-N-acetylmuramate--L-alanine ligase (458 aa).

118-124 (GTHGKTT) contacts ATP.

Belongs to the MurCDEF family.

The protein resides in the cytoplasm. It carries out the reaction UDP-N-acetyl-alpha-D-muramate + L-alanine + ATP = UDP-N-acetyl-alpha-D-muramoyl-L-alanine + ADP + phosphate + H(+). It functions in the pathway cell wall biogenesis; peptidoglycan biosynthesis. Its function is as follows. Cell wall formation. This is UDP-N-acetylmuramate--L-alanine ligase from Clostridium acetobutylicum (strain ATCC 824 / DSM 792 / JCM 1419 / IAM 19013 / LMG 5710 / NBRC 13948 / NRRL B-527 / VKM B-1787 / 2291 / W).